The sequence spans 186 residues: MVNMNILTTVALAGLAAAKTVEVVVAENGGLTFTPNQIKADVNDIVHFKLAKSGHDISSGPFDMPCKPSDNSLYSGKLNEGDEFSVNITNTDPIWLYCSVSKHCSKGMVAVINPPSSGNTIEAYKQAAAGAGNGQAPSRVNNGSSGSGTPTSGGAPAATSPNAASSLTFSGAAALVAMGGAWIGLL.

The N-terminal stretch at 1 to 18 (MVNMNILTTVALAGLAAA) is a signal peptide. Position 55 (H55) interacts with Cu cation. C66 and C104 are oxidised to a cystine. N-linked (GlcNAc...) asparagine glycosylation occurs at N87. Residues C98 and H103 each coordinate Cu cation. The disordered stretch occupies residues 130–160 (GAGNGQAPSRVNNGSSGSGTPTSGGAPAATS). Residue N142 is glycosylated (N-linked (GlcNAc...) asparagine). Residues 143–160 (GSSGSGTPTSGGAPAATS) are compositionally biased toward low complexity. G153 carries the GPI-anchor amidated glycine lipid modification. Positions 154 to 186 (GAPAATSPNAASSLTFSGAAALVAMGGAWIGLL) are cleaved as a propeptide — removed in mature form.

It belongs to the multicopper oxidase family. Cu cation is required as a cofactor.

Its subcellular location is the cell membrane. It is found in the secreted. Probable electron transfer copper protein that serves as a direct electron donor. The chain is Probable GPI-anchored cupredoxin ARB_05732-1 from Arthroderma benhamiae (strain ATCC MYA-4681 / CBS 112371) (Trichophyton mentagrophytes).